The following is a 760-amino-acid chain: Elongation factor G, mitochondrial (760 aa).

The transit peptide at 1-37 directs the protein to the mitochondrion; it reads MIRGMLPRGLRALRPSVSPTVVSSSLHRNFHSSIRRF. The tr-type G domain occupies 68-349; it reads SRLRNIGVSA…AVVDYLPQPN (282 aa). Residues 77-84, 148-152, and 202-205 each bind GTP; these read AHIDSGKT, DTPGH, and NKMD.

This sequence belongs to the TRAFAC class translation factor GTPase superfamily. Classic translation factor GTPase family. EF-G/EF-2 subfamily.

It is found in the mitochondrion. The protein operates within protein biosynthesis; polypeptide chain elongation. Mitochondrial GTPase that catalyzes the GTP-dependent ribosomal translocation step during translation elongation. During this step, the ribosome changes from the pre-translocational (PRE) to the post-translocational (POST) state as the newly formed A-site-bound peptidyl-tRNA and P-site-bound deacylated tRNA move to the P and E sites, respectively. Catalyzes the coordinated movement of the two tRNA molecules, the mRNA and conformational changes in the ribosome. The chain is Elongation factor G, mitochondrial from Meyerozyma guilliermondii (strain ATCC 6260 / CBS 566 / DSM 6381 / JCM 1539 / NBRC 10279 / NRRL Y-324) (Yeast).